A 487-amino-acid polypeptide reads, in one-letter code: Aspartyl/glutamyl-tRNA(Asn/Gln) amidotransferase subunit B (487 aa).

The protein belongs to the GatB/GatE family. GatB subfamily. As to quaternary structure, heterotrimer of A, B and C subunits.

It carries out the reaction L-glutamyl-tRNA(Gln) + L-glutamine + ATP + H2O = L-glutaminyl-tRNA(Gln) + L-glutamate + ADP + phosphate + H(+). It catalyses the reaction L-aspartyl-tRNA(Asn) + L-glutamine + ATP + H2O = L-asparaginyl-tRNA(Asn) + L-glutamate + ADP + phosphate + 2 H(+). Functionally, allows the formation of correctly charged Asn-tRNA(Asn) or Gln-tRNA(Gln) through the transamidation of misacylated Asp-tRNA(Asn) or Glu-tRNA(Gln) in organisms which lack either or both of asparaginyl-tRNA or glutaminyl-tRNA synthetases. The reaction takes place in the presence of glutamine and ATP through an activated phospho-Asp-tRNA(Asn) or phospho-Glu-tRNA(Gln). The chain is Aspartyl/glutamyl-tRNA(Asn/Gln) amidotransferase subunit B from Chlamydia caviae (strain ATCC VR-813 / DSM 19441 / 03DC25 / GPIC) (Chlamydophila caviae).